A 61-amino-acid chain; its full sequence is Small ribosomal subunit protein uS14 (61 aa).

Positions 24, 27, 40, and 43 each coordinate Zn(2+).

This sequence belongs to the universal ribosomal protein uS14 family. Zinc-binding uS14 subfamily. Part of the 30S ribosomal subunit. Contacts proteins S3 and S10. Zn(2+) is required as a cofactor.

Its function is as follows. Binds 16S rRNA, required for the assembly of 30S particles and may also be responsible for determining the conformation of the 16S rRNA at the A site. The sequence is that of Small ribosomal subunit protein uS14 from Streptococcus mutans serotype c (strain ATCC 700610 / UA159).